The sequence spans 124 residues: Fluoride-specific ion channel FluC 1 (124 aa).

A run of 4 helical transmembrane segments spans residues 1–21 (MCAVSLTKPVAVVALGGALGA), 30–50 (LWPGIWTVLLINVVGSLLLGY), 64–84 (FLGVGVLGGFTTFSTFAVDAV), and 93–113 (LYVVATLIPALLAARLGMLAG). Positions 71 and 74 each coordinate Na(+).

This sequence belongs to the fluoride channel Fluc/FEX (TC 1.A.43) family.

The protein resides in the cell membrane. It catalyses the reaction fluoride(in) = fluoride(out). With respect to regulation, na(+) is not transported, but it plays an essential structural role and its presence is essential for fluoride channel function. In terms of biological role, fluoride-specific ion channel. Important for reducing fluoride concentration in the cell, thus reducing its toxicity. This chain is Fluoride-specific ion channel FluC 1, found in Rhodococcus jostii (strain RHA1).